A 1813-amino-acid chain; its full sequence is U3 small nucleolar RNA-associated protein 10 (1813 aa).

5 HEAT repeats span residues 245 to 283 (DVLI…KASL), 389 to 427 (SETI…LQFN), 428 to 464 (ESDT…DIMP), 584 to 621 (ADMQ…LASK), and 659 to 695 (IIHH…QDDS). Disordered regions lie at residues 686 to 705 (IRGP…STGV) and 887 to 912 (DLGS…SSMD). Basic and acidic residues predominate over residues 690–705 (RSQDDSDRTRSESTGV). 7 HEAT repeats span residues 1058–1095 (QTID…AFEH), 1189–1228 (KIAV…KAHG), 1265–1302 (LSLV…SSND), 1309–1347 (ARVL…KYGK), 1398–1437 (EALP…HVPW), 1678–1715 (LASI…LAVA), and 1769–1806 (ALLP…ILGE).

It belongs to the HEATR1/UTP10 family. Component of the ribosomal small subunit (SSU) processome.

Its subcellular location is the nucleus. It is found in the nucleolus. In terms of biological role, involved in nucleolar processing of pre-18S ribosomal RNA. Involved in ribosome biosynthesis. This chain is U3 small nucleolar RNA-associated protein 10, found in Coccidioides immitis (strain RS) (Valley fever fungus).